The chain runs to 652 residues: ATP-dependent zinc metalloprotease FtsH 2 (652 aa).

Over 1–6 (MNKYRR) the chain is Cytoplasmic. A helical transmembrane segment spans residues 7 to 27 (GLALGALALAVFILIGVGISM). Topologically, residues 28–108 (RATPQPVNLT…PAGNGAISAD (81 aa)) are extracellular. A helical membrane pass occupies residues 109 to 129 (LMLLLRILTIVAVGVVIFVLF). Topologically, residues 130–652 (RRFGPSSIGT…RAAKPQIDRT (523 aa)) are cytoplasmic. An ATP-binding site is contributed by 200–207 (GPPGTGKT). Position 420 (H420) interacts with Zn(2+). Residue E421 is part of the active site. The Zn(2+) site is built by H424 and D496.

In the central section; belongs to the AAA ATPase family. This sequence in the C-terminal section; belongs to the peptidase M41 family. As to quaternary structure, homohexamer. Zn(2+) is required as a cofactor.

The protein localises to the cell membrane. In terms of biological role, acts as a processive, ATP-dependent zinc metallopeptidase for both cytoplasmic and membrane proteins. Plays a role in the quality control of integral membrane proteins. The polypeptide is ATP-dependent zinc metalloprotease FtsH 2 (Sphaerobacter thermophilus (strain ATCC 49802 / DSM 20745 / KCCM 41009 / NCIMB 13125 / S 6022)).